A 112-amino-acid polypeptide reads, in one-letter code: Probable prefoldin subunit 1 (112 aa).

This sequence belongs to the prefoldin subunit beta family. Heterohexamer of two PFD-alpha type and four PFD-beta type subunits.

Binds specifically to cytosolic chaperonin (c-CPN) and transfers target proteins to it. Binds to nascent polypeptide chain and promotes folding in an environment in which there are many competing pathways for nonnative proteins. The protein is Probable prefoldin subunit 1 of Schizosaccharomyces pombe (strain 972 / ATCC 24843) (Fission yeast).